The primary structure comprises 779 residues: Ribosome-releasing factor 2, mitochondrial (779 aa).

The region spanning 68–353 (AKIRNIGIMA…AVTTYLPSPE (286 aa)) is the tr-type G domain. Residues 77 to 84 (AHIDAGKT), 141 to 145 (DTPGH), and 195 to 198 (NKMD) each bind GTP.

Belongs to the TRAFAC class translation factor GTPase superfamily. Classic translation factor GTPase family. EF-G/EF-2 subfamily.

It is found in the mitochondrion. It catalyses the reaction GTP + H2O = GDP + phosphate + H(+). Mitochondrial GTPase that mediates the disassembly of ribosomes from messenger RNA at the termination of mitochondrial protein biosynthesis. Acts in collaboration with MRRF. GTP hydrolysis follows the ribosome disassembly and probably occurs on the ribosome large subunit. Not involved in the GTP-dependent ribosomal translocation step during translation elongation. This chain is Ribosome-releasing factor 2, mitochondrial (Gfm2), found in Mus musculus (Mouse).